The chain runs to 312 residues: DNA-directed RNA polymerase subunit alpha (312 aa).

Positions 1–226 (MIEFEKPIIT…EHLNLFTDLT (226 aa)) are alpha N-terminal domain (alpha-NTD). The tract at residues 243-312 (DEKVLDRTIE…DLGLGLKNDK (70 aa)) is alpha C-terminal domain (alpha-CTD).

Belongs to the RNA polymerase alpha chain family. In terms of assembly, homodimer. The RNAP catalytic core consists of 2 alpha, 1 beta, 1 beta' and 1 omega subunit. When a sigma factor is associated with the core the holoenzyme is formed, which can initiate transcription.

It catalyses the reaction RNA(n) + a ribonucleoside 5'-triphosphate = RNA(n+1) + diphosphate. In terms of biological role, DNA-dependent RNA polymerase catalyzes the transcription of DNA into RNA using the four ribonucleoside triphosphates as substrates. In Streptococcus pyogenes serotype M1, this protein is DNA-directed RNA polymerase subunit alpha.